Consider the following 528-residue polypeptide: Intestinal-type alkaline phosphatase (528 aa).

The signal sequence occupies residues 1–19; sequence MQGPWVLLLLGLRLQLSLG. Aspartate 61 is a Mg(2+) binding site. Zn(2+) contacts are provided by aspartate 61 and serine 111. The active-site Phosphoserine intermediate is serine 111. The cysteines at positions 140 and 202 are disulfide-linked. The N-linked (GlcNAc...) asparagine glycan is linked to asparagine 141. Mg(2+) is bound at residue serine 174. Ca(2+) is bound at residue glutamate 235. Asparagine 268 carries N-linked (GlcNAc...) asparagine glycosylation. Ca(2+)-binding residues include phenylalanine 288, glutamate 289, and aspartate 304. Glutamate 330 contributes to the Mg(2+) binding site. The Zn(2+) site is built by aspartate 335, histidine 339, aspartate 376, and histidine 377. Asparagine 429 is a glycosylation site (N-linked (GlcNAc...) asparagine). Zn(2+) is bound at residue histidine 451. A disulfide bridge connects residues cysteine 486 and cysteine 493. Aspartate 503 carries GPI-anchor amidated aspartate lipidation. Positions 504–528 are cleaved as a propeptide — removed in mature form; sequence AAHPVAASLPLLAGTLLLLGASAAP.

It belongs to the alkaline phosphatase family. Homodimer. Mg(2+) is required as a cofactor. Requires Zn(2+) as cofactor. It depends on Ca(2+) as a cofactor.

The protein resides in the cell membrane. It carries out the reaction a phosphate monoester + H2O = an alcohol + phosphate. Its function is as follows. Alkaline phosphatase that can hydrolyze various phosphate compounds. The protein is Intestinal-type alkaline phosphatase (ALPI) of Homo sapiens (Human).